The chain runs to 382 residues: S-adenosylmethionine synthase (382 aa).

Histidine 16 provides a ligand contact to ATP. Mg(2+) is bound at residue aspartate 18. Glutamate 44 is a binding site for K(+). Residues glutamate 57 and glutamine 100 each coordinate L-methionine. The flexible loop stretch occupies residues 100-110; the sequence is QSADIAMGVDE. ATP is bound by residues 165 to 167, aspartate 240, 246 to 247, alanine 263, and lysine 267; these read DAK and RK. Aspartate 240 contributes to the L-methionine binding site. Lysine 271 contributes to the L-methionine binding site.

This sequence belongs to the AdoMet synthase family. In terms of assembly, homotetramer; dimer of dimers. Mg(2+) is required as a cofactor. Requires K(+) as cofactor.

It localises to the cytoplasm. It carries out the reaction L-methionine + ATP + H2O = S-adenosyl-L-methionine + phosphate + diphosphate. It participates in amino-acid biosynthesis; S-adenosyl-L-methionine biosynthesis; S-adenosyl-L-methionine from L-methionine: step 1/1. Its function is as follows. Catalyzes the formation of S-adenosylmethionine (AdoMet) from methionine and ATP. The overall synthetic reaction is composed of two sequential steps, AdoMet formation and the subsequent tripolyphosphate hydrolysis which occurs prior to release of AdoMet from the enzyme. This Saccharophagus degradans (strain 2-40 / ATCC 43961 / DSM 17024) protein is S-adenosylmethionine synthase.